Consider the following 60-residue polypeptide: Large ribosomal subunit protein bL32 (60 aa).

Residues 1–60 (MAVQQNKKSPSKRGMHRSHDFLVNPATAIEPNTGETHLRHHISPNGFYRGRKVLKTKADE) form a disordered region. Over residues 49–60 (RGRKVLKTKADE) the composition is skewed to basic residues.

It belongs to the bacterial ribosomal protein bL32 family.

The sequence is that of Large ribosomal subunit protein bL32 from Bordetella bronchiseptica (strain ATCC BAA-588 / NCTC 13252 / RB50) (Alcaligenes bronchisepticus).